We begin with the raw amino-acid sequence, 202 residues long: Osteoclast-stimulating factor 1 (202 aa).

The SH3 domain maps to 12 to 71 (GQVKVFRALYTFEPRTPDELYFEEGDIIYISDMSDTNWWKGTCKGRTGLIPSNYVAEQAE). ANK repeat units lie at residues 72-101 (SIDNPLHEAAKRGNLSWLRECLDNQVGVNG), 105-135 (AGNTALYWACHGGHKDIVDVLFTQANLELNQ), and 139-168 (LGDTALHAAAWKGYADIVEMLLAKGARTDL).

It localises to the cytoplasm. Induces bone resorption, acting probably through a signaling cascade which results in the secretion of factor(s) enhancing osteoclast formation and activity. In Gallus gallus (Chicken), this protein is Osteoclast-stimulating factor 1 (OSTF1).